The chain runs to 102 residues: uncharacterized protein (102 aa).

This is an uncharacterized protein from Sinorhizobium fredii (strain NBRC 101917 / NGR234).